The chain runs to 346 residues: Hydroxymethylglutaryl-CoA synthase (346 aa).

A (3S)-3-hydroxy-3-methylglutaryl-CoA-binding site is contributed by aspartate 28. Glutamate 80 serves as the catalytic Proton donor/acceptor. The (3S)-3-hydroxy-3-methylglutaryl-CoA site is built by cysteine 112 and threonine 153. The Acyl-thioester intermediate role is filled by cysteine 112. A CoA-binding site is contributed by arginine 199. (3S)-3-hydroxy-3-methylglutaryl-CoA is bound by residues threonine 201 and histidine 234. Histidine 234 acts as the Proton donor/acceptor in catalysis. CoA is bound at residue lysine 239. Arginine 243, asparagine 266, and serine 296 together coordinate (3S)-3-hydroxy-3-methylglutaryl-CoA.

Belongs to the thiolase-like superfamily. Archaeal HMG-CoA synthase family. As to quaternary structure, interacts with acetoacetyl-CoA thiolase that catalyzes the precedent step in the pathway and with a DUF35 protein. The acetoacetyl-CoA thiolase/HMG-CoA synthase complex channels the intermediate via a fused CoA-binding site, which allows for efficient coupling of the endergonic thiolase reaction with the exergonic HMGCS reaction.

The enzyme catalyses acetoacetyl-CoA + acetyl-CoA + H2O = (3S)-3-hydroxy-3-methylglutaryl-CoA + CoA + H(+). Its pathway is metabolic intermediate biosynthesis; (R)-mevalonate biosynthesis; (R)-mevalonate from acetyl-CoA: step 2/3. Its function is as follows. Catalyzes the condensation of acetyl-CoA with acetoacetyl-CoA to form 3-hydroxy-3-methylglutaryl-CoA (HMG-CoA). Functions in the mevalonate (MVA) pathway leading to isopentenyl diphosphate (IPP), a key precursor for the biosynthesis of isoprenoid compounds that are building blocks of archaeal membrane lipids. The polypeptide is Hydroxymethylglutaryl-CoA synthase (Methanosphaera stadtmanae (strain ATCC 43021 / DSM 3091 / JCM 11832 / MCB-3)).